The chain runs to 266 residues: F-actin-capping protein subunit beta (266 aa).

Belongs to the F-actin-capping protein beta subunit family. As to quaternary structure, component of the F-actin capping complex, composed of a heterodimer of an alpha and a beta subunit.

The protein resides in the cytoplasm. It is found in the cytoskeleton. Its subcellular location is the actin patch. Its function is as follows. F-actin-capping proteins bind in a Ca(2+)-independent manner to the fast growing ends of actin filaments (barbed end) thereby blocking the exchange of subunits at these ends. Unlike other capping proteins (such as gelsolin and severin), these proteins do not sever actin filaments. The sequence is that of F-actin-capping protein subunit beta (cap2) from Aspergillus oryzae (strain ATCC 42149 / RIB 40) (Yellow koji mold).